Here is a 126-residue protein sequence, read N- to C-terminus: MARIAGVDLPDHKKLEVALTYIYGIGWSKAREVCEQTGIPSIKKLGELTPEELNQLRRYIEQNIKVEGDLRREVQLNIKRLVDIGTYRGLRHVRGLPVRGQQTKTNARTRKGRRKGTVANKKKVSK.

The disordered stretch occupies residues 96-126; sequence LPVRGQQTKTNARTRKGRRKGTVANKKKVSK. Residues 107–126 show a composition bias toward basic residues; it reads ARTRKGRRKGTVANKKKVSK.

It belongs to the universal ribosomal protein uS13 family. In terms of assembly, part of the 30S ribosomal subunit. Forms a loose heterodimer with protein S19. Forms two bridges to the 50S subunit in the 70S ribosome.

In terms of biological role, located at the top of the head of the 30S subunit, it contacts several helices of the 16S rRNA. In the 70S ribosome it contacts the 23S rRNA (bridge B1a) and protein L5 of the 50S subunit (bridge B1b), connecting the 2 subunits; these bridges are implicated in subunit movement. Contacts the tRNAs in the A and P-sites. The chain is Small ribosomal subunit protein uS13 from Hydrogenobaculum sp. (strain Y04AAS1).